Consider the following 184-residue polypeptide: Photosystem I assembly protein Ycf4 (184 aa).

A run of 2 helical transmembrane segments spans residues 22 to 42 (FCWAFILFLGSLGFLLVGTSS) and 57 to 77 (IIFFPQGIVMSFYGIAGLFIS).

This sequence belongs to the Ycf4 family.

The protein resides in the plastid. It localises to the chloroplast thylakoid membrane. In terms of biological role, seems to be required for the assembly of the photosystem I complex. The polypeptide is Photosystem I assembly protein Ycf4 (Lobularia maritima (Sweet alyssum)).